A 511-amino-acid chain; its full sequence is ATP synthase subunit alpha (511 aa).

ATP is bound at residue 170-177 (GDRQTGKT).

Belongs to the ATPase alpha/beta chains family. In terms of assembly, F-type ATPases have 2 components, CF(1) - the catalytic core - and CF(0) - the membrane proton channel. CF(1) has five subunits: alpha(3), beta(3), gamma(1), delta(1), epsilon(1). CF(0) has three main subunits: a(1), b(2) and c(9-12). The alpha and beta chains form an alternating ring which encloses part of the gamma chain. CF(1) is attached to CF(0) by a central stalk formed by the gamma and epsilon chains, while a peripheral stalk is formed by the delta and b chains.

It is found in the cell inner membrane. It catalyses the reaction ATP + H2O + 4 H(+)(in) = ADP + phosphate + 5 H(+)(out). Produces ATP from ADP in the presence of a proton gradient across the membrane. The alpha chain is a regulatory subunit. This is ATP synthase subunit alpha from Pelagibacter ubique (strain HTCC1062).